The sequence spans 986 residues: Vacuolar membrane protease (986 aa).

At 1 to 16 the chain is on the cytoplasmic side; sequence MAPLRLSRANPLAFAR. The helical transmembrane segment at 17–37 threads the bilayer; it reads WPVTLITAVVYLAFLIPLLIV. At 38-392 the chain is on the vacuolar side; it reads HHVVPSPPTA…TTFVLFELHT (355 aa). An N-linked (GlcNAc...) asparagine glycan is attached at N121. Positions 176 and 188 each coordinate Zn(2+). E222 acts as the Proton acceptor in catalysis. Positions 223, 248, and 321 each coordinate Zn(2+). The chain crosses the membrane as a helical span at residues 393–413; the sequence is LFALSVTLLVVAPLALLVTGI. Residues 414-444 are Cytoplasmic-facing; it reads ALTRADKMYLFRTSAKADESLDSVPLQGLRG. A helical membrane pass occupies residues 445-465; the sequence is FFRFPFLFAIPTAVTVGLAYL. The Vacuolar portion of the chain corresponds to 466-475; that stretch reads VTKVNPLIIH. A helical membrane pass occupies residues 476 to 496; that stretch reads SSEYAVWSMMLSAWTFLAWFV. The Cytoplasmic segment spans residues 497–510; that stretch reads SRMADFARPTALHR. The helical transmembrane segment at 511–531 threads the bilayer; that stretch reads IYTLTWMFVLAWVLLVISTVY. Residues 532–535 lie on the Vacuolar side of the membrane; that stretch reads QNQR. The helical transmembrane segment at 536-556 threads the bilayer; that stretch reads GLAGSYSVFFFFSGTFLATWI. Residues 557–668 lie on the Cytoplasmic side of the membrane; that stretch reads SYLELFSLPR…SASLPTWTWT (112 aa). Residues 573–585 show a composition bias toward polar residues; that stretch reads QNRPTSRRASSYG. Residues 573–622 form a disordered region; that stretch reads QNRPTSRRASSYGGSRLGTASGEDHEEDDHDAEEEEEEQEPTESTSLLGG. A compositionally biased stretch (acidic residues) spans 596–613; it reads DHEEDDHDAEEEEEEQEP. The helical transmembrane segment at 669-689 threads the bilayer; that stretch reads LQFLLMAPLVLIMVGPLALLL. The Vacuolar segment spans residues 690-704; it reads TSALHQTGQDGSSSL. Residues 705-725 traverse the membrane as a helical segment; the sequence is FIYVAIAALTTFLLTPLLPFI. Residues 726–732 are Cytoplasmic-facing; sequence HRHTYHL. Residues 733–753 traverse the membrane as a helical segment; the sequence is PVFLLLVFLGTLIYNLVAFPF. Residues 754–986 lie on the Vacuolar side of the membrane; the sequence is SPTNRLKLFF…LVEGWKGFSI (233 aa). N799, N840, and N948 each carry an N-linked (GlcNAc...) asparagine glycan. A disordered region spans residues 840 to 859; sequence NTTDDKEGDEDTHHPRKARI.

This sequence belongs to the peptidase M28 family. The cofactor is Zn(2+).

Its subcellular location is the vacuole membrane. In terms of biological role, may be involved in vacuolar sorting and osmoregulation. The protein is Vacuolar membrane protease of Aspergillus niger (strain ATCC MYA-4892 / CBS 513.88 / FGSC A1513).